The sequence spans 762 residues: 5-methyltetrahydropteroyltriglutamate--homocysteine methyltransferase (762 aa).

5-methyltetrahydropteroyltri-L-glutamate is bound by residues 17 to 20 and lysine 111; that span reads REWK. L-homocysteine contacts are provided by residues 435 to 437 and glutamate 488; that span reads IGS. Residues 435–437 and glutamate 488 each bind L-methionine; that span reads IGS. 5-methyltetrahydropteroyltri-L-glutamate contacts are provided by residues 519–520 and tryptophan 565; that span reads RC. Aspartate 603 lines the L-homocysteine pocket. An L-methionine-binding site is contributed by aspartate 603. Glutamate 609 is a binding site for 5-methyltetrahydropteroyltri-L-glutamate. Histidine 645, cysteine 647, and glutamate 669 together coordinate Zn(2+). Histidine 698 (proton donor) is an active-site residue. Zn(2+) is bound at residue cysteine 730.

This sequence belongs to the vitamin-B12 independent methionine synthase family. It depends on Zn(2+) as a cofactor.

The catalysed reaction is 5-methyltetrahydropteroyltri-L-glutamate + L-homocysteine = tetrahydropteroyltri-L-glutamate + L-methionine. It participates in amino-acid biosynthesis; L-methionine biosynthesis via de novo pathway; L-methionine from L-homocysteine (MetE route): step 1/1. Functionally, catalyzes the transfer of a methyl group from 5-methyltetrahydrofolate to homocysteine resulting in methionine formation. The chain is 5-methyltetrahydropteroyltriglutamate--homocysteine methyltransferase from Bacillus anthracis (strain CDC 684 / NRRL 3495).